A 126-amino-acid chain; its full sequence is Large ribosomal subunit protein bL12 (126 aa).

This sequence belongs to the bacterial ribosomal protein bL12 family. In terms of assembly, homodimer. Part of the ribosomal stalk of the 50S ribosomal subunit. Forms a multimeric L10(L12)X complex, where L10 forms an elongated spine to which 2 to 4 L12 dimers bind in a sequential fashion. Binds GTP-bound translation factors.

Forms part of the ribosomal stalk which helps the ribosome interact with GTP-bound translation factors. Is thus essential for accurate translation. This Blochmanniella floridana protein is Large ribosomal subunit protein bL12.